A 276-amino-acid polypeptide reads, in one-letter code: 4-hydroxy-3-methylbut-2-enyl diphosphate reductase (276 aa).

Residue cysteine 12 coordinates [4Fe-4S] cluster. (2E)-4-hydroxy-3-methylbut-2-enyl diphosphate contacts are provided by histidine 36 and histidine 70. 2 residues coordinate dimethylallyl diphosphate: histidine 36 and histidine 70. 2 residues coordinate isopentenyl diphosphate: histidine 36 and histidine 70. Cysteine 92 serves as a coordination point for [4Fe-4S] cluster. Histidine 120 contacts (2E)-4-hydroxy-3-methylbut-2-enyl diphosphate. Position 120 (histidine 120) interacts with dimethylallyl diphosphate. Residue histidine 120 coordinates isopentenyl diphosphate. Glutamate 122 serves as the catalytic Proton donor. Residue threonine 158 coordinates (2E)-4-hydroxy-3-methylbut-2-enyl diphosphate. A [4Fe-4S] cluster-binding site is contributed by cysteine 186. The (2E)-4-hydroxy-3-methylbut-2-enyl diphosphate site is built by serine 214, serine 215, asparagine 216, and serine 258. Residues serine 214, serine 215, asparagine 216, and serine 258 each coordinate dimethylallyl diphosphate. Serine 214, serine 215, asparagine 216, and serine 258 together coordinate isopentenyl diphosphate.

This sequence belongs to the IspH family. [4Fe-4S] cluster serves as cofactor.

The catalysed reaction is isopentenyl diphosphate + 2 oxidized [2Fe-2S]-[ferredoxin] + H2O = (2E)-4-hydroxy-3-methylbut-2-enyl diphosphate + 2 reduced [2Fe-2S]-[ferredoxin] + 2 H(+). It catalyses the reaction dimethylallyl diphosphate + 2 oxidized [2Fe-2S]-[ferredoxin] + H2O = (2E)-4-hydroxy-3-methylbut-2-enyl diphosphate + 2 reduced [2Fe-2S]-[ferredoxin] + 2 H(+). It functions in the pathway isoprenoid biosynthesis; dimethylallyl diphosphate biosynthesis; dimethylallyl diphosphate from (2E)-4-hydroxy-3-methylbutenyl diphosphate: step 1/1. The protein operates within isoprenoid biosynthesis; isopentenyl diphosphate biosynthesis via DXP pathway; isopentenyl diphosphate from 1-deoxy-D-xylulose 5-phosphate: step 6/6. Functionally, catalyzes the conversion of 1-hydroxy-2-methyl-2-(E)-butenyl 4-diphosphate (HMBPP) into a mixture of isopentenyl diphosphate (IPP) and dimethylallyl diphosphate (DMAPP). Acts in the terminal step of the DOXP/MEP pathway for isoprenoid precursor biosynthesis. The protein is 4-hydroxy-3-methylbut-2-enyl diphosphate reductase of Wolinella succinogenes (strain ATCC 29543 / DSM 1740 / CCUG 13145 / JCM 31913 / LMG 7466 / NCTC 11488 / FDC 602W) (Vibrio succinogenes).